The following is a 268-amino-acid chain: MSGFLIALFWVIFSKYVFDVLFFREAKIEREIFGNKNLALSLSYAGYFLGLAFSFYSVYFYESLFREVLYLIFVSFTLLLGVYIFDLIFLRKIDLKEEILRGNAGAGITQGIYFLSLGILISASFWRKESFILSVIYSLIYLSLGMVMLFISTLLMSRLLKLNFEEEVKKENFSASLVLGSITLGVSVVLYGAISGEFMGSLIFDLFSTVLYFVVSQVLMVIFYVVVEFLLFRKVILSSEVYENNLSASLILSATFIASAFITLAVMG.

8 helical membrane passes run 5 to 24 (LIALFWVIFSKYVFDVLFFR), 37 to 59 (NLALSLSYAGYFLGLAFSFYSVY), 69 to 91 (LYLIFVSFTLLLGVYIFDLIFLR), 104 to 126 (AGAGITQGIYFLSLGILISASFW), 130 to 152 (SFILSVIYSLIYLSLGMVMLFIS), 173 to 195 (FSASLVLGSITLGVSVVLYGAIS), 210 to 232 (VLYFVVSQVLMVIFYVVVEFLLF), and 245 to 267 (NLSASLILSATFIASAFITLAVM).

It belongs to the UPF0719 family.

It localises to the cell membrane. This is UPF0719 transmembrane protein aq_1349 from Aquifex aeolicus (strain VF5).